We begin with the raw amino-acid sequence, 341 residues long: MPFLIELLRITGIVTLCPKYRLDRNSLLLVATKRNYIDVVRYLVKKGVDINFQETIRDNLTPLMIASRFNSHQLVELLLNNGAIINQRSLTCGNTALHLAVKNDNRITVDILLFHGANTNITNNDGFTPLHKAVIYNASIDIIKKLLRYKADVNIRDNEEENTGLTPLDIAMSCNNYEIISLLVSHVIRLDYSTCMSNKTKGFDHNKKLVKDNKRLQRIAIHCLKDIEKMKQVSINSRFTLFDLFVNNNVDLLLRCINKDNRFIVNFDKKLTVFNILYTDFIDTFMSRHVLLNKASKVLEDLFLDNDSNTSSWNNLPNEIKDHIFTYINNDELKIMTGSKT.

ANK repeat units lie at residues 23–55 (DRNS…FQET), 58–87 (DNLT…IINQ), 92–124 (CGNT…ITNN), 125–158 (DGFT…IRDN), and 163–195 (TGLT…YSTC).

This is Putative ankyrin repeat protein FPV031 (ANK3) from Fowlpox virus (strain NVSL) (FPV).